The sequence spans 144 residues: Large ribosomal subunit protein uL16 (144 aa).

The protein belongs to the universal ribosomal protein uL16 family. In terms of assembly, part of the 50S ribosomal subunit.

Binds 23S rRNA and is also seen to make contacts with the A and possibly P site tRNAs. The chain is Large ribosomal subunit protein uL16 from Lacticaseibacillus paracasei (strain ATCC 334 / BCRC 17002 / CCUG 31169 / CIP 107868 / KCTC 3260 / NRRL B-441) (Lactobacillus paracasei).